Reading from the N-terminus, the 259-residue chain is MGSKTLPAPVPIHPSLQLTNYSFLQAFNGLPVPAEHVPNLYGFSALHAVHLHQWTLGYPTLHLPRSSFSKVPGVSSLVDSRFQIPTFPLFPHMIHPKQESPNLSNKTKPRFDFANLAVAATQEDHCKLGLMNDQGSPPAMGGLLDVTKLTPEKKPTRGRLPSKTKKEFVCKFCGRHFTKSYNLLIHERTHTDERPYTCDICHKAFRRQDHLRDHRYIHSKEKPFKCQECGKGFCQSRTLAVHKTLHTQVKELKPSKIKC.

3 consecutive C2H2-type zinc fingers follow at residues 168 to 190 (FVCKFCGRHFTKSYNLLIHERTH), 196 to 218 (YTCDICHKAFRRQDHLRDHRYIH), and 224 to 246 (FKCQECGKGFCQSRTLAVHKTLH).

Belongs to the Odd C2H2-type zinc-finger protein family. As to expression, at early gastrula stage, expressed in the involuting mesoderm and endoderm. During neurulation, expressed in the pronephric primordium, following expression of osr2. During tailbud (stage 35), expressed in the rectal diverticulum and in the kidney ducts.

It is found in the nucleus. Functionally, transcriptional repressor. Required for pronephric kidney development. In Xenopus laevis (African clawed frog), this protein is Protein odd-skipped-related 1.